The primary structure comprises 214 residues: Heat shock protein 26 (214 aa).

S2 carries the post-translational modification N-acetylserine. At T42 the chain carries Phosphothreonine. The sHSP domain occupies 86 to 207 (GFPRSVAVPV…KNHVKKIEVS (122 aa)). S90 carries the phosphoserine modification. T163 carries the phosphothreonine modification. Residues 192–214 (KPQKDGKNHVKKIEVSSQESWGN) form a disordered region. Residues 193-205 (PQKDGKNHVKKIE) are compositionally biased toward basic and acidic residues. S208 and S211 each carry phosphoserine.

The protein belongs to the small heat shock protein (HSP20) family. Present in large complexes.

Functionally, not known. One of the major polypeptides produced on heat shock. The polypeptide is Heat shock protein 26 (HSP26) (Saccharomyces cerevisiae (strain ATCC 204508 / S288c) (Baker's yeast)).